Here is a 270-residue protein sequence, read N- to C-terminus: Glutamate 5-kinase (270 aa).

Residue lysine 17 coordinates ATP. Positions 57, 144, and 160 each coordinate substrate. Residues 180-181 (SD) and 222-228 (TGGMTSK) each bind ATP.

This sequence belongs to the glutamate 5-kinase family.

The protein localises to the cytoplasm. It catalyses the reaction L-glutamate + ATP = L-glutamyl 5-phosphate + ADP. The protein operates within amino-acid biosynthesis; L-proline biosynthesis; L-glutamate 5-semialdehyde from L-glutamate: step 1/2. Functionally, catalyzes the transfer of a phosphate group to glutamate to form L-glutamate 5-phosphate. The polypeptide is Glutamate 5-kinase (Lactococcus lactis subsp. cremoris (strain SK11)).